Consider the following 217-residue polypeptide: Urease accessory protein UreG (217 aa).

The segment covering 1–18 has biased composition (basic residues); it reads MNAPHHPAHSTVRTKKLP. Residues 1–24 are disordered; sequence MNAPHHPAHSTVRTKKLPPLRVGV. 26–33 provides a ligand contact to GTP; the sequence is GPVGSGKT.

This sequence belongs to the SIMIBI class G3E GTPase family. UreG subfamily. As to quaternary structure, homodimer. UreD, UreF and UreG form a complex that acts as a GTP-hydrolysis-dependent molecular chaperone, activating the urease apoprotein by helping to assemble the nickel containing metallocenter of UreC. The UreE protein probably delivers the nickel.

Its subcellular location is the cytoplasm. Its function is as follows. Facilitates the functional incorporation of the urease nickel metallocenter. This process requires GTP hydrolysis, probably effectuated by UreG. The chain is Urease accessory protein UreG from Paraburkholderia xenovorans (strain LB400).